Consider the following 330-residue polypeptide: (4-{4-[2-(gamma-L-glutamylamino)ethyl]phenoxymethyl}furan-2-yl)methanamine synthase (330 aa).

Belongs to the MfnF family.

The enzyme catalyses gamma-L-glutamyltyramine + [5-(aminomethyl)furan-3-yl]methyl diphosphate = (4-{4-[2-(gamma-L-glutamylamino)ethyl]phenoxymethyl}furan-2-yl)methanamine + diphosphate. Its pathway is cofactor biosynthesis; methanofuran biosynthesis. Functionally, catalyzes the condensation between 5-(aminomethyl)-3-furanmethanol diphosphate (F1-PP) and gamma-glutamyltyramine to produce APMF-Glu. The protein is (4-{4-[2-(gamma-L-glutamylamino)ethyl]phenoxymethyl}furan-2-yl)methanamine synthase of Methanocaldococcus jannaschii (strain ATCC 43067 / DSM 2661 / JAL-1 / JCM 10045 / NBRC 100440) (Methanococcus jannaschii).